We begin with the raw amino-acid sequence, 432 residues long: Nematocyst expressed protein 3-like (432 aa).

The signal sequence occupies residues 1 to 19 (MRVVYLVLVVAVIIAITEA). 6 cysteine pairs are disulfide-bonded: Cys52–Cys91, Cys59–Cys84, Cys73–Cys88, Cys125–Cys140, Cys157–Cys176, and Cys166–Cys180. 3 consecutive ShKT domains span residues 59-91 (CKAF…CKLC), 107-143 (VVRA…CMLC), and 149-183 (GPCD…CDVY). The segment covering 235-313 (GAQYPAATAA…PEAAPSEPEA (79 aa)) has biased composition (low complexity). The interval 235 to 432 (GAQYPAATAA…KSKSGHKRHH (198 aa)) is disordered. The span at 314 to 330 (APAPAPEMAPAPAPEMA) shows a compositional bias: pro residues. Residues 331 to 408 (PAPEAASAPA…AAPSEQPMPG (78 aa)) show a composition bias toward low complexity. A compositionally biased stretch (basic residues) spans 409-432 (KKSKSKPSKRKGVKKSKSGHKRHH).

Belongs to the NEP3 family. Nematocytes. In late planulae, transcripts are found throughout the ectoderm in nematocytes, with high concentration of expressing cells in the oral pole. In primary polyps, is expressed in nematocytes in the body wall and physa ectoderm and in the upper and lower pharynx.

The protein localises to the nematocyst. The protein resides in the secreted. Probable toxin. This is Nematocyst expressed protein 3-like from Nematostella vectensis (Starlet sea anemone).